We begin with the raw amino-acid sequence, 590 residues long: L-gulonolactone oxidase 5 (590 aa).

Residues 1–31 (MAFGYSPSYCSFWRTLLGLYCLFTLVHTVIS) form the signal peptide. The FAD-binding PCMH-type domain maps to 60–242 (STCRAANVAY…SQVTFELQPM (183 aa)).

This sequence belongs to the oxygen-dependent FAD-linked oxidoreductase family. FAD serves as cofactor.

The enzyme catalyses L-gulono-1,4-lactone + O2 = L-ascorbate + H2O2 + H(+). It functions in the pathway cofactor biosynthesis; L-ascorbate biosynthesis. In terms of biological role, catalyzes the oxidation of L-gulono-1,4-lactone to ascorbic acid. L-gulono-1,4-lactone is oxidized to hydrogen peroxide and L-xylo-hexulonolactone which spontaneously isomerizes to L-ascorbate. This chain is L-gulonolactone oxidase 5, found in Arabidopsis thaliana (Mouse-ear cress).